A 504-amino-acid polypeptide reads, in one-letter code: GTPase Obg (504 aa).

The region spanning 2–159 is the Obg domain; that stretch reads SQFVDRVVLH…KDVTLELKSM (158 aa). Residues 68–88 form a disordered region; the sequence is AERGNNGAGDDRHGARGKDLT. Residues 160-340 enclose the OBG-type G domain; that stretch reads ADVGLVGFPS…LRFALMDIVR (181 aa). GTP-binding positions include 166–173, 191–195, 212–215, 292–295, and 321–323; these read GFPSAGKS, FTTLA, DVPG, NKMD, and STV. Residues Ser-173 and Thr-193 each coordinate Mg(2+). The OCT domain maps to 364 to 444; that stretch reads KRKGRFADFE…IGGITFEWDP (81 aa). A disordered region spans residues 449 to 481; it reads GVDQTPAYGRGKDRRLEQTDRVTAEQRKRASQA. Residues 458 to 476 are compositionally biased toward basic and acidic residues; it reads RGKDRRLEQTDRVTAEQRK.

The protein belongs to the TRAFAC class OBG-HflX-like GTPase superfamily. OBG GTPase family. As to quaternary structure, monomer. Mg(2+) is required as a cofactor.

It localises to the cytoplasm. An essential GTPase which binds GTP, GDP and possibly (p)ppGpp with moderate affinity, with high nucleotide exchange rates and a fairly low GTP hydrolysis rate. Plays a role in control of the cell cycle, stress response, ribosome biogenesis and in those bacteria that undergo differentiation, in morphogenesis control. This is GTPase Obg from Corynebacterium urealyticum (strain ATCC 43042 / DSM 7109).